We begin with the raw amino-acid sequence, 229 residues long: Allatostatin-A (229 aa).

The first 18 residues, 1–18 (MLSTSLPVCFLVIGAALC), serve as a signal peptide directing secretion. Positions 19-48 (APERMQNDPDPHDSTAQGSDNHSDHIAPLA) are excised as a propeptide. The tract at residues 23–46 (MQNDPDPHDSTAQGSDNHSDHIAP) is disordered. Position 58 is a leucine amide (Leu58). Positions 62–80 (AYSYVSEYKRLPVYNFGLG) are excised as a propeptide. A Leucine amide modification is found at Leu90. Residues 94–130 (SVDEDQTNDDQQQIMNNDLDQAALAEFFDQYDDAGYE) constitute a propeptide that is removed on maturation. Residue Leu140 is modified to Leucine amide. The propeptide occupies 144-152 (FADDDTSEE). Leucine amide is present on residues Leu162, Leu173, Leu184, Leu196, and Leu210. Positions 214-229 (SADDASTEDSDNYFDV) are excised as a propeptide.

It belongs to the allatostatin family. In terms of tissue distribution, allatostatin-A-1: Expressed in antennal lobe (AL), corpora cardiaca (CC), corpora allata (CA) and gnathal ganglion (GNG) (at protein level). Expression in AL and GNG detected in most animals, in CC and CA in some animals (at protein level). Allatostatin-A-3: Expressed in antennal lobe (AL), corpora cardiaca (CC), corpora allata (CA) and gnathal ganglion (GNG) (at protein level). Expression in AL detected in all animals, in GNG, CC and CA in most animals (at protein level). Allatostatin-A-4: Expressed in antennal lobe (AL), corpora cardiaca (CC), corpora allata (CA) and gnathal ganglion (GNG) in all animals (at protein level). Allatostatin-A-5: Expressed in antennal lobe (AL), corpora cardiaca (CC), corpora allata (CA) and gnathal ganglion (GNG) in all animals (at protein level). Allatostatin-A-6: Expressed in antennal lobe (AL) and gnathal ganglion (GNG) (at protein level). Expression in AL detected in some animals, in GNG in few animals (at protein level). Not expressed in corpora cardiaca (CC) and corpora allata (CA) (at protein level). Allatostatin-A-7: Expressed in antennal lobe (AL), corpora cardiaca (CC), corpora allata (CA) and gnathal ganglion (GNG) (at protein level). Expression in AL detected in all animals, in GNG, CC and CA in most animals (at protein level). Allatostatin-A-8: Expressed in antennal lobe (AL), corpora cardiaca (CC), corpora allata (CA) and gnathal ganglion (GNG) (at protein level). Expression in AL detected in all animals, in GNG, CC and CA in most animals (at protein level). Allatostatin-A-9: Expressed in antennal lobe (AL), corpora cardiaca (CC), corpora allata (CA) and gnathal ganglion (GNG) (at protein level). Expression in AL detected in all animals, in GNG in most animals and in CC and CA in some animals (at protein level).

It is found in the secreted. Functionally, neuropeptide inhibitors of juvenile hormone synthesis and gut muscle contraction. This chain is Allatostatin-A, found in Agrotis ipsilon (Black cutworm moth).